Consider the following 685-residue polypeptide: Transforming growth factor beta activator LRRC33 (685 aa).

A signal peptide spans 1 to 27; sequence MPVCGCLSVVLSHAVVLLMLVLHSASG. At 28–640 the chain is on the extracellular side; it reads HPQTFPCRLI…CGFTNNNKES (613 aa). One can recognise an LRRNT domain in the interval 29–56; the sequence is PQTFPCRLIQRVALCSGRQLSVIPDCLP. 7 LRR repeats span residues 57–79, 80–102, 103–129, 130–154, 155–178, 180–201, and 202–225; these read HETE…LSRY, PFLR…AFIE, SHLL…AFRS, LTQL…LVAN, LSSL…TFRD, HQLK…AFDH, and MKKL…EMTQ. An N-linked (GlcNAc...) asparagine glycan is attached at Asn-154. N-linked (GlcNAc...) asparagine glycans are attached at residues Asn-230 and Asn-244. 2 LRR repeats span residues 248-271 and 273-296; these read TFQL…PTNN and IRTL…TSSN. Residues Asn-291, Asn-296, Asn-309, Asn-312, and Asn-325 are each glycosylated (N-linked (GlcNAc...) asparagine). 11 LRR repeats span residues 326 to 349, 351 to 373, 374 to 397, 400 to 423, 425 to 447, 457 to 480, 482 to 503, 505 to 526, 527 to 549, 551 to 571, and 573 to 596; these read LSSV…FIKQ, PQLY…SEDL, PVTI…QTSK, LNNL…IFTS, PNLN…NYMG, MASL…AFKG, SLTH…SLKG, ANTL…FSPY, TNLK…LMAL, LKLL…HASL, and AKKL…WFRT. N-linked (GlcNAc...) asparagine glycosylation is found at Asn-402 and Asn-407. A glycan (N-linked (GlcNAc...) asparagine) is linked at Asn-533. An LRRCT domain is found at 597-635; the sequence is FGENKGIHVADLSEITCLDLNYRRHKVVLTDAVYCGFTN. The helical transmembrane segment at 641 to 661 threads the bilayer; sequence VVWYILLFVTVSVSIMGISVI. At 662–685 the chain is on the cytoplasmic side; sequence YMLTFKPRMLPRVIKKKCWRPTSY.

Belongs to the LRRC32/LRRC33 family.

The protein resides in the cell membrane. The protein localises to the endoplasmic reticulum membrane. Its function is as follows. Key regulator of transforming growth factor beta-1 (TGFB1) specifically required for microglia function in the nervous system. Required for activation of latent TGF-beta-1 in macrophages and microglia: associates specifically via disulfide bonds with the Latency-associated peptide (LAP), which is the regulatory chain of TGFB1, and regulates integrin-dependent activation of TGF-beta-1. TGF-beta-1 activation mediated by lrrc33/nrros is highly localized: there is little spreading of TGF-beta-1 activated from one microglial cell to neighboring microglia, suggesting the existence of localized and selective activation of TGF-beta-1 by lrrc33/nrros. This is Transforming growth factor beta activator LRRC33 from Danio rerio (Zebrafish).